The primary structure comprises 325 residues: Diacylglycerol acyltransferase/mycolyltransferase Ag85B (325 aa).

A signal peptide spans 1–38; that stretch reads MTFIDKIRGHWARRMTVAAVAALLLPGLVGVVGGSATA. 82–83 contacts substrate; it reads LR. Residues 98 to 108 form a fibronectin-binding region; the sequence is FEMFLDSGLSV. Cysteine 127 and cysteine 132 are joined by a disulfide. Serine 166 provides a ligand contact to substrate. Serine 166 functions as the Nucleophile in the catalytic mechanism. Glutamate 272 is an active-site residue. Residues 274–277 and 304–306 each bind substrate; these read LTIR and HNW. Histidine 304 is an active-site residue.

It belongs to the mycobacterial A85 antigen family.

The protein localises to the secreted. The enzyme catalyses 2 alpha,alpha'-trehalose 6-mycolate = alpha,alpha'-trehalose 6,6'-bismycolate + alpha,alpha-trehalose. It catalyses the reaction an acyl-CoA + a 1,2-diacyl-sn-glycerol = a triacyl-sn-glycerol + CoA. In terms of biological role, the antigen 85 proteins (FbpA, FbpB, FbpC) are responsible for the high affinity of mycobacteria for fibronectin, a large adhesive glycoprotein. They also help to maintain the integrity of the cell wall by catalyzing the transfer of mycolic acids to cell wall arabinogalactan and through the synthesis of alpha,alpha-trehalose dimycolate (TDM, cord factor). They catalyze the transfer of a mycoloyl residue from one molecule of alpha,alpha-trehalose monomycolate (TMM) to another TMM, leading to the formation of TDM. The protein is Diacylglycerol acyltransferase/mycolyltransferase Ag85B (fbpB) of Mycolicibacterium smegmatis (strain ATCC 700084 / mc(2)155) (Mycobacterium smegmatis).